Here is a 429-residue protein sequence, read N- to C-terminus: Choline kinase A2 (429 aa).

Residues 82-88 (KGGMSNM), Arg-111, 152-158 (EYIPSRP), and Gln-257 each bind ATP. 84-86 (GMS) serves as a coordination point for substrate. Glu-258 lines the Ca(2+) pocket. Asp-301 is an ATP binding site. Ca(2+) is bound by residues Glu-320 and Ile-323.

The protein belongs to the choline/ethanolamine kinase family. Homodimer. A small proportion exists as higher oligomers. Requires Mg(2+) as cofactor.

The enzyme catalyses choline + ATP = phosphocholine + ADP + H(+). It catalyses the reaction ethanolamine + ATP = phosphoethanolamine + ADP + H(+). The protein operates within phospholipid metabolism; phosphatidylcholine biosynthesis; phosphocholine from choline: step 1/1. It functions in the pathway phospholipid metabolism; phosphatidylethanolamine biosynthesis; phosphatidylethanolamine from ethanolamine: step 1/3. Inhibited by Ca(2+). Mild inhibition by high levels of Mg(2+)(&gt;10 mM). Its function is as follows. Catalyzes the first step in phosphatidylcholine biosynthesis. May contribute to phosphatidylethanolamine biosynthesis. Phosphorylates choline and ethanolamine but the activity is much higher with choline. This Caenorhabditis elegans protein is Choline kinase A2.